A 119-amino-acid polypeptide reads, in one-letter code: Ribonuclease P protein component (119 aa).

It belongs to the RnpA family. In terms of assembly, consists of a catalytic RNA component (M1 or rnpB) and a protein subunit.

It carries out the reaction Endonucleolytic cleavage of RNA, removing 5'-extranucleotides from tRNA precursor.. Its function is as follows. RNaseP catalyzes the removal of the 5'-leader sequence from pre-tRNA to produce the mature 5'-terminus. It can also cleave other RNA substrates such as 4.5S RNA. The protein component plays an auxiliary but essential role in vivo by binding to the 5'-leader sequence and broadening the substrate specificity of the ribozyme. This Bacillus cereus (strain ATCC 14579 / DSM 31 / CCUG 7414 / JCM 2152 / NBRC 15305 / NCIMB 9373 / NCTC 2599 / NRRL B-3711) protein is Ribonuclease P protein component.